A 133-amino-acid polypeptide reads, in one-letter code: MEPISHLVKSSLPNYLSSLPIPDSIGGWFKLSFKDWLALIPPTVVVAGLGYTAYLAYCPAAQGSCSAKKSGRCNNLIRKNEPKVVDMIDVEDIAEKAAFCRCWKTKNWPYCDGSHGEHNKQTGDNVGPIVIKK.

Over 1-35 (MEPISHLVKSSLPNYLSSLPIPDSIGGWFKLSFKD) the chain is Lumenal. Residues 36 to 58 (WLALIPPTVVVAGLGYTAYLAYC) form a helical membrane-spanning segment. The Cytoplasmic segment spans residues 59 to 133 (PAAQGSCSAK…DNVGPIVIKK (75 aa)). [2Fe-2S] cluster is bound by residues C100, C102, C111, and H115.

This sequence belongs to the CISD protein family. CISD2 subfamily. [2Fe-2S] cluster serves as cofactor.

Its subcellular location is the endoplasmic reticulum membrane. This is CDGSH iron-sulfur domain-containing protein 2 homolog from Drosophila erecta (Fruit fly).